The chain runs to 306 residues: Glutamyl-Q tRNA(Asp) synthetase (306 aa).

L-glutamate-binding positions include 29-33 (RFAPS) and aspartate 65. Positions 32–42 (PSPTGPLHLGN) match the 'HIGH' region motif. Residues cysteine 121, cysteine 123, tyrosine 141, and cysteine 145 each contribute to the Zn(2+) site. L-glutamate contacts are provided by tyrosine 188 and arginine 206. A 'KMSKS' region motif is present at residues 244–248 (KLAKR). An ATP-binding site is contributed by lysine 247.

The protein belongs to the class-I aminoacyl-tRNA synthetase family. GluQ subfamily. It depends on Zn(2+) as a cofactor.

Catalyzes the tRNA-independent activation of glutamate in presence of ATP and the subsequent transfer of glutamate onto a tRNA(Asp). Glutamate is transferred on the 2-amino-5-(4,5-dihydroxy-2-cyclopenten-1-yl) moiety of the queuosine in the wobble position of the QUC anticodon. The chain is Glutamyl-Q tRNA(Asp) synthetase from Prochlorococcus marinus (strain MIT 9303).